Consider the following 421-residue polypeptide: MDMIEINGGNRLTGEVKVSGAKNAVLPVLTASLLASEGVSKLMNVPALSDVETINNVISTLNAEVSYDKDEESVTVDATKELNEEAPYEYVSKMRASILVMGPLLARLGHAKVALPGGCAIGSRPIEQHIKGFEELGADIHMDGGFIYASTENGLKGTTIHLDFPSVGATQNIIMAASLAEGKTVLENVAREPEIVDLANYINEMGGNVSGAGTDTIIIHGVETLHGVEHAIIPDRIEAGTLLIAGAITRGDVLVNGAIKEHMTSLVYKLEEMGVNLDYQDDAIRVRVEDELKPVDIKTLPHPGFPTDMQSQMMALLLTAEGHKVVTETVFENRFMHVAEFKRMNAKISVEGRSAKIEGKSELQGAQVKATDLRAAAALILAGLVADGTTQVTELKHLDRGYVDLHGKLEALGADIKRTQA.

22–23 (KN) provides a ligand contact to phosphoenolpyruvate. Arginine 95 lines the UDP-N-acetyl-alpha-D-glucosamine pocket. Cysteine 119 functions as the Proton donor in the catalytic mechanism. Cysteine 119 is modified (2-(S-cysteinyl)pyruvic acid O-phosphothioketal). UDP-N-acetyl-alpha-D-glucosamine is bound by residues 124–128 (RPIEQ), aspartate 308, and valine 330.

This sequence belongs to the EPSP synthase family. MurA subfamily.

Its subcellular location is the cytoplasm. The catalysed reaction is phosphoenolpyruvate + UDP-N-acetyl-alpha-D-glucosamine = UDP-N-acetyl-3-O-(1-carboxyvinyl)-alpha-D-glucosamine + phosphate. It functions in the pathway cell wall biogenesis; peptidoglycan biosynthesis. Its function is as follows. Cell wall formation. Adds enolpyruvyl to UDP-N-acetylglucosamine. This Staphylococcus saprophyticus subsp. saprophyticus (strain ATCC 15305 / DSM 20229 / NCIMB 8711 / NCTC 7292 / S-41) protein is UDP-N-acetylglucosamine 1-carboxyvinyltransferase 2.